A 790-amino-acid polypeptide reads, in one-letter code: B3 domain-containing transcription repressor VAL1 (790 aa).

The tract at residues 234–260 is disordered; sequence KPSRPAISTPPVASKSAQARIGRPPVE. A DNA-binding region (TF-B3) is located at residues 295–396; sequence FEKTLSASDA…KLIMGSRKAA (102 aa). 2 disordered regions span residues 400–429 and 446–468; these read DMQGCGLTNGTSTEDTSSSGVTENPPSING and NLNSETNGGRIGDDPTRVKEKKR. Polar residues predominate over residues 405–429; the sequence is GLTNGTSTEDTSSSGVTENPPSING. The CW-type zinc-finger motif lies at 538 to 588; the sequence is SGEQERWATCDDCSKWRRLPVDALLSFKWTCIDNVWDVSRCSCSAPEESLK. Cys547, Cys550, Cys568, and Cys580 together coordinate Zn(2+). Positions 685-732 form a coiled coil; that stretch reads LMMRRKKKQLERDVTAAEDKKKKDMELAESDKSKEEKEVNTARIDLNS. Residues 689–737 form a disordered region; sequence RKKKQLERDVTAAEDKKKKDMELAESDKSKEEKEVNTARIDLNSDPYNK. Residues 694-724 show a composition bias toward basic and acidic residues; it reads LERDVTAAEDKKKKDMELAESDKSKEEKEVN.

Interacts with SNL1. In terms of tissue distribution, expressed in flowers and at lower levels in roots, stems and leaves.

The protein localises to the nucleus. In terms of biological role, transcriptional repressor of gene expression involved in embryonic pathways, such as LEC1, ABI3, and FUS3. Repressor of the sugar-inducible genes involved in the seed maturation program in seedlings. Plays an essential role in regulating the transition from seed maturation to seedling growth. Functionally redundant with VAL2/HSL1. The sequence is that of B3 domain-containing transcription repressor VAL1 (VAL1) from Arabidopsis thaliana (Mouse-ear cress).